The primary structure comprises 1038 residues: TonB-dependent receptor P39 (1038 aa).

Positions 1 to 39 (MFKQKLKMKPKIKRNCTFSGLAFILMLLFSSFTVNNLNA) are cleaved as a signal peptide. The TonB box motif lies at 120-127 (DEVVVIGY). Residues 131 to 243 (KRADVIGAVG…ANGVVLITTK (113 aa)) form the TBDR plug domain. Positions 249–1038 (FPKMTVDYIS…EIVIGLNVEF (790 aa)) constitute a TBDR beta-barrel domain. Positions 1021–1038 (SLRYPNQTEIVIGLNVEF) match the TonB C-terminal box motif.

It belongs to the TonB-dependent receptor family.

The protein resides in the cell outer membrane. Functionally, tonB-dependent receptor probably involved in ulvan degradation. Ulvan is the main polysaccharide component of the Ulvales (green seaweed) cell wall. It is composed of disaccharide building blocks comprising 3-sulfated rhamnose (Rha3S) linked to D-glucuronic acid (GlcA), L-iduronic acid (IduA), or D-xylose (Xyl). The TonB-dependent receptor may mediate transport of ulvan oligosaccharides from the surface of the outer membrane to the periplasm for subsequent degradation. The chain is TonB-dependent receptor P39 from Formosa agariphila (strain DSM 15362 / KCTC 12365 / LMG 23005 / KMM 3901 / M-2Alg 35-1).